A 431-amino-acid polypeptide reads, in one-letter code: Enolase (431 aa).

Gln-167 lines the (2R)-2-phosphoglycerate pocket. The Proton donor role is filled by Glu-209. Mg(2+) is bound by residues Asp-246, Glu-290, and Asp-317. (2R)-2-phosphoglycerate-binding residues include Lys-342, Arg-371, Ser-372, and Lys-393. The Proton acceptor role is filled by Lys-342.

This sequence belongs to the enolase family. As to quaternary structure, component of the RNA degradosome, a multiprotein complex involved in RNA processing and mRNA degradation. Requires Mg(2+) as cofactor.

It localises to the cytoplasm. Its subcellular location is the secreted. The protein resides in the cell surface. The enzyme catalyses (2R)-2-phosphoglycerate = phosphoenolpyruvate + H2O. It functions in the pathway carbohydrate degradation; glycolysis; pyruvate from D-glyceraldehyde 3-phosphate: step 4/5. Functionally, catalyzes the reversible conversion of 2-phosphoglycerate (2-PG) into phosphoenolpyruvate (PEP). It is essential for the degradation of carbohydrates via glycolysis. The chain is Enolase from Yersinia enterocolitica serotype O:8 / biotype 1B (strain NCTC 13174 / 8081).